We begin with the raw amino-acid sequence, 634 residues long: CRISPR-associated protein MJ1674 (634 aa).

In terms of biological role, CRISPR (clustered regularly interspaced short palindromic repeat) is an adaptive immune system that provides protection against mobile genetic elements (viruses, transposable elements and conjugative plasmids). CRISPR clusters contain spacers, sequences complementary to antecedent mobile elements, and target invading nucleic acids. CRISPR clusters are transcribed and processed into CRISPR RNA (crRNA). The type III Csm effector complex binds crRNA and acts as a crRNA-guided RNase, DNase and cyclic oligoadenylate synthase; binding of target RNA cognate to the crRNA is required for all activities. The polypeptide is CRISPR-associated protein MJ1674 (Methanocaldococcus jannaschii (strain ATCC 43067 / DSM 2661 / JAL-1 / JCM 10045 / NBRC 100440) (Methanococcus jannaschii)).